We begin with the raw amino-acid sequence, 222 residues long: Charged multivesicular body protein 2a (222 aa).

Residue Met1 is modified to N-acetylmethionine. The stretch at 12 to 53 (EELLRQNQRALNRAMRELDRERQKLETQEKKIIADIKKMAKQ) forms a coiled coil. The interaction with VPS4B stretch occupies residues 56-222 (MDAVRIMAKD…EERLKNLRRD (167 aa)). Residues 179–188 (LSNLPSTGGS) are compositionally biased toward polar residues. The segment at 179–198 (LSNLPSTGGSLSVAAGGKKA) is disordered. Position 184 is a phosphoserine (Ser184). A Phosphothreonine modification is found at Thr185. A phosphoserine mark is found at Ser188, Ser190, and Ser203. Residues 195 to 222 (GKKAEATASALADADADLEERLKNLRRD) adopt a coiled-coil conformation. The MIT-interacting motif motif lies at 210-220 (ADLEERLKNLR). Residues 217–222 (KNLRRD) form an interaction with VTA1 region.

This sequence belongs to the SNF7 family. As to quaternary structure, probable core component of the endosomal sorting required for transport complex III (ESCRT-III). ESCRT-III components are thought to multimerize to form a flat lattice on the perimeter membrane of the endosome. Several assembly forms of ESCRT-III may exist that interact and act sequentially. In vitro, heteromerizes with CHMP3 (but not CHMP4) to form helical tubular structures that expose membrane-interacting sites on the outside whereas VPS4B can associate on the inside of the tubule. Interacts with CHMP1B, CHMP2B, CHMP3, CHMP4A, CHMP4B, CHMP4C and CHMP5. Interacts with VPS4A; the interaction is direct. Interacts with VPS4B; the interaction is direct. Interacts with MITD1. Interacts with VTA1; the interaction probably involves the open conformation of CHMP2A. Post-translationally, ISGylated in a CHMP5-dependent manner. Isgylation weakens and inhibits its interactions with VPS4A and VTA1 respectively. As to expression, widely expressed. Highly expressed in brain, heart, liver and kidney.

It is found in the late endosome membrane. The protein resides in the cytoplasm. Its subcellular location is the nucleus envelope. Its function is as follows. Probable core component of the endosomal sorting required for transport complex III (ESCRT-III) which is involved in multivesicular bodies (MVBs) formation and sorting of endosomal cargo proteins into MVBs. MVBs contain intraluminal vesicles (ILVs) that are generated by invagination and scission from the limiting membrane of the endosome and mostly are delivered to lysosomes enabling degradation of membrane proteins, such as stimulated growth factor receptors, lysosomal enzymes and lipids. The MVB pathway appears to require the sequential function of ESCRT-O, -I,-II and -III complexes. ESCRT-III proteins mostly dissociate from the invaginating membrane before the ILV is released. The ESCRT machinery also functions in topologically equivalent membrane fission events, such as the terminal stages of cytokinesis. Together with SPAST, the ESCRT-III complex promotes nuclear envelope sealing and mitotic spindle disassembly during late anaphase. Recruited to the reforming nuclear envelope (NE) during anaphase by LEMD2. ESCRT-III proteins are believed to mediate the necessary vesicle extrusion and/or membrane fission activities, possibly in conjunction with the AAA ATPase VPS4. The polypeptide is Charged multivesicular body protein 2a (Chmp2a) (Mus musculus (Mouse)).